Consider the following 191-residue polypeptide: Gene BABR protein 1 (191 aa).

The chain is Gene BABR protein 1 from Babesia bovis.